A 247-amino-acid polypeptide reads, in one-letter code: SPX domain-containing protein 5 (247 aa).

The region spanning 1–139 is the SPX domain; it reads MKFGKRLKRQ…GGVLRLPVIA (139 aa). Residues 224-247 are disordered; sequence SDWLIQSVQPPPPPPPSSPLIIPT. Residues 232–241 show a composition bias toward pro residues; that stretch reads QPPPPPPPSS.

This is SPX domain-containing protein 5 (SPX5) from Oryza sativa subsp. indica (Rice).